Consider the following 624-residue polypeptide: APC membrane recruitment protein 2 (624 aa).

Disordered regions lie at residues 77 to 111 (EEPCTNAGAGQLNTEKSPKVVTINPDVSSDSSVAK), 126 to 177 (ENVK…GLIL), 195 to 230 (PLCEKEKSEEDIPADVPSVEHSGDVNTSAEENPLNG), 342 to 369 (ADQDDDGGSSKGSKVVPGNGKKVTSKKN), and 397 to 588 (FSMI…ELPR). Low complexity predominate over residues 102-111 (DVSSDSSVAK). Basic and acidic residues-rich tracts occupy residues 155-168 (SKKDKSYKDDKEGA) and 195-204 (PLCEKEKSEE). A compositionally biased stretch (low complexity) spans 352 to 363 (KGSKVVPGNGKK). Basic and acidic residues-rich tracts occupy residues 422-435 (REVKCSDSGRDRNT) and 450-469 (ERGDQNSKGNEKRQCHRNSD).

The protein belongs to the Amer family.

The protein localises to the cell membrane. Functionally, negative regulator of the canonical Wnt signaling pathway involved in neuroectodermal patterning. Acts by specifically binding phosphatidylinositol 4,5-bisphosphate (PtdIns(4,5)P2), translocating to the cell membrane and interacting with key regulators of the canonical Wnt signaling pathway, such as components of the beta-catenin destruction complex. The sequence is that of APC membrane recruitment protein 2 (amer2) from Xenopus laevis (African clawed frog).